A 156-amino-acid chain; its full sequence is Transcription elongation factor GreA (156 aa).

Positions 2–27 form a coiled coil; that stretch reads EKTFPMTKEGLDKLKAELENLKLVKR.

The protein belongs to the GreA/GreB family.

Its function is as follows. Necessary for efficient RNA polymerase transcription elongation past template-encoded arresting sites. The arresting sites in DNA have the property of trapping a certain fraction of elongating RNA polymerases that pass through, resulting in locked ternary complexes. Cleavage of the nascent transcript by cleavage factors such as GreA or GreB allows the resumption of elongation from the new 3'terminus. GreA releases sequences of 2 to 3 nucleotides. This chain is Transcription elongation factor GreA, found in Lactococcus lactis subsp. cremoris (strain MG1363).